We begin with the raw amino-acid sequence, 243 residues long: Small ribosomal subunit protein uS2c (243 aa).

Residues 224-243 (GNNGKVSSDQEDTQELQTVQ) are disordered.

It belongs to the universal ribosomal protein uS2 family.

The protein localises to the plastid. The protein resides in the chloroplast. This is Small ribosomal subunit protein uS2c (rps2) from Rhodomonas salina (Cryptomonas salina).